The primary structure comprises 80 residues: RNA-binding protein Hfq (80 aa).

Positions 9 to 68 (EPFLNALRKERIPVSIYLVNGIKLQGQIDSFDQFVVLLKNTVSQMVYKHAISTIVPSRPV) constitute a Sm domain.

The protein belongs to the Hfq family. As to quaternary structure, homohexamer.

Its function is as follows. RNA chaperone that binds small regulatory RNA (sRNAs) and mRNAs to facilitate mRNA translational regulation in response to envelope stress, environmental stress and changes in metabolite concentrations. Also binds with high specificity to tRNAs. This chain is RNA-binding protein Hfq, found in Thioalkalivibrio sulfidiphilus (strain HL-EbGR7).